Here is a 246-residue protein sequence, read N- to C-terminus: Probable transcriptional regulatory protein YebC (246 aa).

Positions 1 to 20 are disordered; sequence MAGHSKWANTRHRKAAQDAK.

The protein belongs to the TACO1 family.

The protein localises to the cytoplasm. The sequence is that of Probable transcriptional regulatory protein YebC from Salmonella typhimurium (strain LT2 / SGSC1412 / ATCC 700720).